Reading from the N-terminus, the 120-residue chain is Glycine cleavage system H protein (120 aa).

One can recognise a Lipoyl-binding domain in the interval 20–102 (DGTVGISDHA…YEGGWLFKLD (83 aa)). At Lys61 the chain carries N6-lipoyllysine.

It belongs to the GcvH family. In terms of assembly, the glycine cleavage system is composed of four proteins: P, T, L and H. Requires (R)-lipoate as cofactor.

The glycine cleavage system catalyzes the degradation of glycine. The H protein shuttles the methylamine group of glycine from the P protein to the T protein. In Deinococcus radiodurans (strain ATCC 13939 / DSM 20539 / JCM 16871 / CCUG 27074 / LMG 4051 / NBRC 15346 / NCIMB 9279 / VKM B-1422 / R1), this protein is Glycine cleavage system H protein.